A 516-amino-acid chain; its full sequence is MEPAVSLAVCALLFLLWVRVKGLEFVLIHQRWVFVCLFLLPLSLIFDIYYYVRAWVVFKLSSAPRLHEQRVRDIQKQVREWKEQGSKTFMCTGRPGWLTVSLRVGKYKKTHKNIMINLMDILEVDTKKQIVRVEPLVTMGQVTALLTSIGWTLPVLPELDDLTVGGLIMGTGIESSSHKYGLFQHICTAYELVLADGSFVRCTPSENSDLFYAVPWSCGTLGFLVAAEIRIIPAKKYVKLRFEPVQGLEAICAKFTHESQRQENHFVEGLLYSLDEAVIMTGVMTDEVEPSKLNSIGNYYKPWFFKHVENYLKTNREGLEYIPLRHYYHRHTRSIFWELQDIIPFGNNPIFRYLFGWMVPPKISLLKLTQGETLRKLYEQHHVVQDMLVPMKCLQQALHTFQNDIHVYPIWLCPFILPSQPGLVHPKGNEAELYIDIGAYGEPRVKHFEARSCMRQLEKFVRSVHGFQMLYADCYMNREEFWEMFDGSLYHKLREKLGCQDAFPEVYDKICKAARH.

The N-terminal stretch at 1–22 (MEPAVSLAVCALLFLLWVRVKG) is a signal peptide. Residues 23–31 (LEFVLIHQR) lie on the Lumenal side of the membrane. A helical transmembrane segment spans residues 32–52 (WVFVCLFLLPLSLIFDIYYYV). Residues 53–516 (RAWVVFKLSS…YDKICKAARH (464 aa)) are Cytoplasmic-facing. The 177-residue stretch at 58–234 (FKLSSAPRLH…VAAEIRIIPA (177 aa)) folds into the FAD-binding PCMH-type domain. 163–175 (TVGGLIMGTGIES) lines the FAD pocket.

The protein belongs to the FAD-binding oxidoreductase/transferase type 4 family. As to quaternary structure, interacts with DHCR7; this interaction regulates DHCR7 activity. The cofactor is FAD.

It localises to the endoplasmic reticulum membrane. The protein localises to the golgi apparatus membrane. It catalyses the reaction cholesterol + NADP(+) = desmosterol + NADPH + H(+). The enzyme catalyses lanosterol + NADPH + H(+) = 24,25-dihydrolanosterol + NADP(+). It carries out the reaction 5alpha-cholest-8-en-3beta-ol + NADP(+) = zymosterol + NADPH + H(+). Its pathway is steroid biosynthesis; cholesterol biosynthesis. Its function is as follows. Catalyzes the reduction of the delta-24 double bond of sterol intermediates during cholesterol biosynthesis. In addition to its cholesterol-synthesizing activity, can protect cells from oxidative stress by reducing caspase 3 activity during apoptosis induced by oxidative stress. Also protects against amyloid-beta peptide-induced apoptosis. The protein is Delta(24)-sterol reductase (DHCR24) of Macaca fascicularis (Crab-eating macaque).